The following is a 218-amino-acid chain: MIRLLKKLAVFLIILVGILLLGGIATAGYFAFTYREPINNYYKEGYNKISEYNTEIKKISQNIFQNNLVKTLSEVEKSLNEGRKLTQNNSFASGLDSSLNALEGSLKKINNFDSNAAFTQIKHTLNNITSFVDQMLEKFPNPNQNDDFKRYLTEVSQILFYTGISIIGAFFVSGFLLILFTKKVYGVRVSRFNPQRLLKKHLVLLLRDEEVYDAVFGN.

Helical transmembrane passes span 8-28 (LAVF…ATAG) and 158-178 (ILFY…FLLI).

Its subcellular location is the cell membrane. This is an uncharacterized protein from Mycoplasma genitalium (strain ATCC 33530 / DSM 19775 / NCTC 10195 / G37) (Mycoplasmoides genitalium).